A 729-amino-acid polypeptide reads, in one-letter code: Fatty acid oxidation complex subunit alpha (729 aa).

The interval methionine 1–lysine 189 is enoyl-CoA hydratase/isomerase. Aspartate 296 is a substrate binding site. Residues glutamate 311–alanine 729 form a 3-hydroxyacyl-CoA dehydrogenase region. NAD(+) is bound by residues methionine 324, aspartate 343, valine 400–glutamate 402, lysine 407, and serine 429. Histidine 450 functions as the For 3-hydroxyacyl-CoA dehydrogenase activity in the catalytic mechanism. Asparagine 453 contacts NAD(+). Residues asparagine 500 and tyrosine 660 each coordinate substrate. The segment at arginine 708–alanine 729 is disordered.

It in the N-terminal section; belongs to the enoyl-CoA hydratase/isomerase family. This sequence in the C-terminal section; belongs to the 3-hydroxyacyl-CoA dehydrogenase family. In terms of assembly, heterotetramer of two alpha chains (FadB) and two beta chains (FadA).

It catalyses the reaction a (3S)-3-hydroxyacyl-CoA + NAD(+) = a 3-oxoacyl-CoA + NADH + H(+). The enzyme catalyses a (3S)-3-hydroxyacyl-CoA = a (2E)-enoyl-CoA + H2O. It carries out the reaction a 4-saturated-(3S)-3-hydroxyacyl-CoA = a (3E)-enoyl-CoA + H2O. The catalysed reaction is (3S)-3-hydroxybutanoyl-CoA = (3R)-3-hydroxybutanoyl-CoA. It catalyses the reaction a (3Z)-enoyl-CoA = a 4-saturated (2E)-enoyl-CoA. The enzyme catalyses a (3E)-enoyl-CoA = a 4-saturated (2E)-enoyl-CoA. It functions in the pathway lipid metabolism; fatty acid beta-oxidation. Involved in the aerobic and anaerobic degradation of long-chain fatty acids via beta-oxidation cycle. Catalyzes the formation of 3-oxoacyl-CoA from enoyl-CoA via L-3-hydroxyacyl-CoA. It can also use D-3-hydroxyacyl-CoA and cis-3-enoyl-CoA as substrate. This chain is Fatty acid oxidation complex subunit alpha, found in Salmonella schwarzengrund (strain CVM19633).